Consider the following 319-residue polypeptide: NADH-ubiquinone oxidoreductase chain 1 (319 aa).

A run of 8 helical transmembrane segments spans residues 5-25, 72-92, 102-122, 146-166, 173-193, 225-245, 254-274, and 295-315; these read TINSLMYIIPILIAVAFLTLM, LLISSPILALTTAMLIWTPIP, LGLLSILAISSMAVNSILWAG, VTLGIILLSILILTGGFTMQL, FTWLLTTSWPLAMMWFISTLA, FFLTEYANIIVMNLLTCILFI, ELFLINLITKTMILSLSFLWI, and LPLTMSLCLLHTSLPISTSGI.

It belongs to the complex I subunit 1 family.

Its subcellular location is the mitochondrion inner membrane. It carries out the reaction a ubiquinone + NADH + 5 H(+)(in) = a ubiquinol + NAD(+) + 4 H(+)(out). Functionally, core subunit of the mitochondrial membrane respiratory chain NADH dehydrogenase (Complex I) that is believed to belong to the minimal assembly required for catalysis. Complex I functions in the transfer of electrons from NADH to the respiratory chain. The immediate electron acceptor for the enzyme is believed to be ubiquinone. This chain is NADH-ubiquinone oxidoreductase chain 1 (MT-ND1), found in Varanus flavescens (Yellow monitor).